A 474-amino-acid chain; its full sequence is tRNA-2-methylthio-N(6)-dimethylallyladenosine synthase (474 aa).

The 118-residue stretch at 3–120 (KKLHIKTWGC…LPEMINHVQG (118 aa)) folds into the MTTase N-terminal domain. Positions 12, 49, 83, 157, 161, and 164 each coordinate [4Fe-4S] cluster. In terms of domain architecture, Radical SAM core spans 143–375 (RADGPTAFVS…QDRITKQAMR (233 aa)). The TRAM domain occupies 378-441 (RLMLGTVQRI…TNSLRGIVVR (64 aa)).

This sequence belongs to the methylthiotransferase family. MiaB subfamily. Monomer. [4Fe-4S] cluster serves as cofactor.

It localises to the cytoplasm. It carries out the reaction N(6)-dimethylallyladenosine(37) in tRNA + (sulfur carrier)-SH + AH2 + 2 S-adenosyl-L-methionine = 2-methylsulfanyl-N(6)-dimethylallyladenosine(37) in tRNA + (sulfur carrier)-H + 5'-deoxyadenosine + L-methionine + A + S-adenosyl-L-homocysteine + 2 H(+). Functionally, catalyzes the methylthiolation of N6-(dimethylallyl)adenosine (i(6)A), leading to the formation of 2-methylthio-N6-(dimethylallyl)adenosine (ms(2)i(6)A) at position 37 in tRNAs that read codons beginning with uridine. This Pectobacterium atrosepticum (strain SCRI 1043 / ATCC BAA-672) (Erwinia carotovora subsp. atroseptica) protein is tRNA-2-methylthio-N(6)-dimethylallyladenosine synthase.